The chain runs to 239 residues: ATP-dependent dethiobiotin synthetase BioD (239 aa).

15–20 (EIGKTF) provides a ligand contact to ATP. Position 19 (Thr19) interacts with Mg(2+). The active site involves Lys40. ATP contacts are provided by residues Asp57, 118–121 (EGVG), 178–179 (NH), and 211–213 (AHL). The Mg(2+) site is built by Asp57 and Glu118.

It belongs to the dethiobiotin synthetase family. In terms of assembly, homodimer. Requires Mg(2+) as cofactor.

It is found in the cytoplasm. It catalyses the reaction (7R,8S)-7,8-diammoniononanoate + CO2 + ATP = (4R,5S)-dethiobiotin + ADP + phosphate + 3 H(+). It participates in cofactor biosynthesis; biotin biosynthesis; biotin from 7,8-diaminononanoate: step 1/2. Catalyzes a mechanistically unusual reaction, the ATP-dependent insertion of CO2 between the N7 and N8 nitrogen atoms of 7,8-diaminopelargonic acid (DAPA, also called 7,8-diammoniononanoate) to form a ureido ring. This chain is ATP-dependent dethiobiotin synthetase BioD, found in Burkholderia ambifaria (strain MC40-6).